The chain runs to 272 residues: Sugar-phosphatase AraL (272 aa).

It belongs to the HAD-like hydrolase superfamily. Mg(2+) is required as a cofactor.

The enzyme catalyses sugar phosphate + H2O = sugar + phosphate.. The catalysed reaction is O-phospho-L-serine + H2O = L-serine + phosphate. It carries out the reaction O-phospho-D-serine + H2O = D-serine + phosphate. Catalyzes the dephosphorylation of C5 and C6 carbon sugars in vitro. Catalyzes the dephosphorylation of 3'-AMP and phosphoserine in vitro. This is Sugar-phosphatase AraL (araL) from Bacillus subtilis (strain 168).